Consider the following 171-residue polypeptide: Crossover junction endodeoxyribonuclease RuvC (171 aa).

Residues Asp-7, Glu-67, and Asp-139 contribute to the active site. Mg(2+)-binding residues include Asp-7, Glu-67, and Asp-139.

It belongs to the RuvC family. As to quaternary structure, homodimer which binds Holliday junction (HJ) DNA. The HJ becomes 2-fold symmetrical on binding to RuvC with unstacked arms; it has a different conformation from HJ DNA in complex with RuvA. In the full resolvosome a probable DNA-RuvA(4)-RuvB(12)-RuvC(2) complex forms which resolves the HJ. The cofactor is Mg(2+).

Its subcellular location is the cytoplasm. The enzyme catalyses Endonucleolytic cleavage at a junction such as a reciprocal single-stranded crossover between two homologous DNA duplexes (Holliday junction).. In terms of biological role, the RuvA-RuvB-RuvC complex processes Holliday junction (HJ) DNA during genetic recombination and DNA repair. Endonuclease that resolves HJ intermediates. Cleaves cruciform DNA by making single-stranded nicks across the HJ at symmetrical positions within the homologous arms, yielding a 5'-phosphate and a 3'-hydroxyl group; requires a central core of homology in the junction. The consensus cleavage sequence is 5'-(A/T)TT(C/G)-3'. Cleavage occurs on the 3'-side of the TT dinucleotide at the point of strand exchange. HJ branch migration catalyzed by RuvA-RuvB allows RuvC to scan DNA until it finds its consensus sequence, where it cleaves and resolves the cruciform DNA. The protein is Crossover junction endodeoxyribonuclease RuvC of Geotalea uraniireducens (strain Rf4) (Geobacter uraniireducens).